The sequence spans 270 residues: MEFYGLIGEKLSHSLSPKIHNTLFKDLKIEGAYKLFEVEKENLGKLIESIKLLKIKGVNVTIPYKQDVMEYLDFISDEAKKIGAVNTIYLEDNKLYGYNTDYYGFGTILNNNEIVIRDNVAMVLGNGGAAKAVITYLLDHGIKKIYLVSRKIKGNSADKDERIEFKTYEEISEIKGDILINTTPLGMYPKVDDTPVNEDIINNFNSLIDIIYNPRETRFLKIGKNSNKKVCGGIEMLVGQAIKAEEIWQECQLDNKLTQGLYSIFENEFK.

Shikimate-binding positions include 14–16 (SLS) and Thr61. Lys65 (proton acceptor) is an active-site residue. NADP(+) is bound at residue Asp77. The shikimate site is built by Asn86 and Asp101. Residues 125–129 (GNGGA) and Ile210 contribute to the NADP(+) site. Tyr212 contributes to the shikimate binding site. Gly233 contacts NADP(+).

It belongs to the shikimate dehydrogenase family. As to quaternary structure, homodimer.

It catalyses the reaction shikimate + NADP(+) = 3-dehydroshikimate + NADPH + H(+). It participates in metabolic intermediate biosynthesis; chorismate biosynthesis; chorismate from D-erythrose 4-phosphate and phosphoenolpyruvate: step 4/7. Its function is as follows. Involved in the biosynthesis of the chorismate, which leads to the biosynthesis of aromatic amino acids. Catalyzes the reversible NADPH linked reduction of 3-dehydroshikimate (DHSA) to yield shikimate (SA). This is Shikimate dehydrogenase (NADP(+)) from Clostridium beijerinckii (strain ATCC 51743 / NCIMB 8052) (Clostridium acetobutylicum).